A 46-amino-acid polypeptide reads, in one-letter code: Iota-conotoxin-like R11.17 (46 aa).

Pro-2 and Pro-11 each carry 4-hydroxyproline. Intrachain disulfides connect Cys-5–Cys-19, Cys-12–Cys-22, Cys-18–Cys-27, and Cys-21–Cys-38. The residue at position 29 (Pro-29) is a 4-hydroxyproline. D-phenylalanine is present on Phe-44.

It belongs to the conotoxin I1 superfamily. Expressed by the venom duct.

It is found in the secreted. Functionally, iota-conotoxins bind to voltage-gated sodium channels (Nav) and act as agonists by shifting the voltage-dependence of activation to more hyperpolarized levels. Produces general excitatory symptoms. This chain is Iota-conotoxin-like R11.17, found in Conus radiatus (Rayed cone).